The primary structure comprises 232 residues: Histone H1B (232 aa).

The span at 1–18 shows a compositional bias: low complexity; sequence MSDPAVEVTPAVPVASPA. Disordered stretches follow at residues 1–44 and 99–232; these read MSDP…PPVS and QTKG…AKKA. One can recognise an H15 domain in the interval 39–113; it reads THPPVSEMVV…GASGSFKLPA (75 aa). 5 stretches are compositionally biased toward basic residues: residues 132 to 141, 147 to 173, 181 to 197, 205 to 214, and 222 to 232; these read KPKKAAAKPK, KVKK…KTTK, AAKK…KPKA, KRAAAPKAKK, and KAAKKPAAKKA.

The protein belongs to the histone H1/H5 family.

It localises to the nucleus. Its subcellular location is the chromosome. Functionally, histones H1 are necessary for the condensation of nucleosome chains into higher-order structures. The chain is Histone H1B from Chironomus tentans (Midge).